A 229-amino-acid polypeptide reads, in one-letter code: MAKIGKKLQEAKKLVDKNQFYPLIEAIQLAKKTSYSKFDASIDLAFRLNLDTRKADQQLRGSILLPHGNGKVTRVLVATDSPELQKSSKEAGADFVVDKLELEEIIKQNKFDFDVIVADPKMMPILGRYGKVLGPKGLMPNPKTGTVTPNPDKAVVEIKKGKANYRADKYGIVHSLIGKKSMSDDQLLDNAKVLIDTIKRLKPSVVKGTYIKNLTISSSMGPSIKIKLD.

It belongs to the universal ribosomal protein uL1 family. Part of the 50S ribosomal subunit.

Its function is as follows. Binds directly to 23S rRNA. The L1 stalk is quite mobile in the ribosome, and is involved in E site tRNA release. Functionally, protein L1 is also a translational repressor protein, it controls the translation of the L11 operon by binding to its mRNA. The chain is Large ribosomal subunit protein uL1 from Mycoplasmopsis pulmonis (strain UAB CTIP) (Mycoplasma pulmonis).